A 122-amino-acid chain; its full sequence is MALNIENIIAEIKEASILELNDLVKAIEEEFGVTAAAPVAVAAAGAGEAAAAKDSFDIELTAAGDKKVGVIKVVREITGLGLKEAKELVDGAPNVIKEGVAAAEAEELKAKLEEAGASVTLK.

This sequence belongs to the bacterial ribosomal protein bL12 family. Homodimer. Part of the ribosomal stalk of the 50S ribosomal subunit. Forms a multimeric L10(L12)X complex, where L10 forms an elongated spine to which 2 to 4 L12 dimers bind in a sequential fashion. Binds GTP-bound translation factors.

Forms part of the ribosomal stalk which helps the ribosome interact with GTP-bound translation factors. Is thus essential for accurate translation. This Streptococcus sanguinis (strain SK36) protein is Large ribosomal subunit protein bL12.